The following is a 501-amino-acid chain: MGCGLRKLEDPDDSSPGKIFSTLKRPQVETKTEFAYEYVLLDFTLQASSNPEVIKINSILDIVTKVEDYYLKGYIVGAIHPVIQPVGQRKHLPASCLYRVVLSRLKLSPKNSAAPSGQRRPRLVIEECPLTSEAQTNDAAKELIEKINFAAKRGMKFVGFISQPYSPYKFCNGTNHDGDIESMLHVRHSSDENCRSWNEGTLSGQSSESGIEEELHHESGQYPMEQNGSPSSSKSRKGEASDNKLYTVFNAFDDDSTSWTYQEGILSMKVTRKGSVISTLDADWLELTTFYYKQGLSLIDSFVFWETSKGEHLPKSLEGFFIYEEEGSGVPGSSRKGNDAIVVEQWTVIEGCEIKTDYGPLLHTLAEFGWLLTSVLPTPVLRHDSEGNLATKQIVFLQRPVMWNSAAQTTDKKASRRIKGEDKNKATSRSIGLDTTTPQPAESRHPPEECRLSPSRECWTKEGRLAQHNSFSGFSSSDSVLRELDDGQFDQEDGVTQVTCM.

Disordered stretches follow at residues 1–20 and 196–238; these read MGCG…GKIF and SWNE…SRKG. Gly-2 carries the N-myristoyl glycine lipid modification. Residue Cys-3 is the site of S-palmitoyl cysteine attachment. The segment covering 224-233 has biased composition (polar residues); the sequence is MEQNGSPSSS. Ser-405 carries the phosphoserine modification. The interval 407 to 454 is disordered; sequence AQTTDKKASRRIKGEDKNKATSRSIGLDTTTPQPAESRHPPEECRLSP. Thr-409 is modified (phosphothreonine). The segment covering 410-425 has biased composition (basic and acidic residues); sequence TDKKASRRIKGEDKNK. Polar residues predominate over residues 427-440; it reads TSRSIGLDTTTPQP. At Ser-430 the chain carries Phosphoserine. Residues 442–451 are compositionally biased toward basic and acidic residues; the sequence is ESRHPPEECR.

It belongs to the raftlin family.

The protein localises to the cell membrane. Its function is as follows. Upon bacterial lipopolysaccharide stimulation, mediates clathrin-dependent internalization of TLR4 in dendritic cells, resulting in activation of TICAM1-mediated signaling and subsequent IFNB1 production. May regulate B-cell antigen receptor mediated-signaling. The protein is Raftlin-2 (RFTN2) of Pongo abelii (Sumatran orangutan).